The primary structure comprises 435 residues: ATP-dependent protease ATPase subunit HslU (435 aa).

ATP contacts are provided by residues valine 18, 60–65, aspartate 248, glutamate 313, and arginine 385; that span reads GCGKTE.

This sequence belongs to the ClpX chaperone family. HslU subfamily. In terms of assembly, a double ring-shaped homohexamer of HslV is capped on each side by a ring-shaped HslU homohexamer. The assembly of the HslU/HslV complex is dependent on binding of ATP.

It is found in the cytoplasm. Functionally, ATPase subunit of a proteasome-like degradation complex; this subunit has chaperone activity. The binding of ATP and its subsequent hydrolysis by HslU are essential for unfolding of protein substrates subsequently hydrolyzed by HslV. HslU recognizes the N-terminal part of its protein substrates and unfolds these before they are guided to HslV for hydrolysis. This chain is ATP-dependent protease ATPase subunit HslU, found in Beijerinckia indica subsp. indica (strain ATCC 9039 / DSM 1715 / NCIMB 8712).